The chain runs to 1261 residues: Mediator of RNA polymerase II transcription subunit 14 (1261 aa).

Positions 1-11 (MPNGKQQHEVT) are enriched in basic and acidic residues. 3 disordered regions span residues 1–21 (MPNGKQQHEVTESSSPPEIPH), 413–435 (NETAIVDDNDNDNDDTNNTGETE), and 1193–1220 (DNDIKPQQQEPQQNEKENSKTTSKENET). Over residues 417-427 (IVDDNDNDNDD) the composition is skewed to acidic residues. Residues 1205–1220 (QNEKENSKTTSKENET) are compositionally biased toward basic and acidic residues.

It belongs to the Mediator complex subunit 14 family. As to quaternary structure, component of the Mediator complex.

The protein localises to the nucleus. Functionally, component of the Mediator complex, a coactivator involved in the regulated transcription of nearly all RNA polymerase II-dependent genes. Mediator functions as a bridge to convey information from gene-specific regulatory proteins to the basal RNA polymerase II transcription machinery. Mediator is recruited to promoters by direct interactions with regulatory proteins and serves as a scaffold for the assembly of a functional preinitiation complex with RNA polymerase II and the general transcription factors. This Candida albicans (strain SC5314 / ATCC MYA-2876) (Yeast) protein is Mediator of RNA polymerase II transcription subunit 14 (MED14).